A 22-amino-acid chain; its full sequence is 50 kDa cell wall protein (22 aa).

The protein localises to the secreted. The protein resides in the cell wall. This is 50 kDa cell wall protein from Nicotiana tabacum (Common tobacco).